A 799-amino-acid chain; its full sequence is MVLPILPLIDDLASWGTKKAYASLVGQVLLDGSSLNKDEVLQFAKEEEVPLVALSLPNAKFSDDDIIAFLNNGVSSLFIASQDAKIVDHLVEELNVPKNRIVVEGNGVFHNQFLVNQKFSQDRIVSIKKLTKDLLIKEVVAEVRTDRPDGLFTTLVVDQYERCLGLVYSSKESIAKAIDLGRGVYYSRSRNEIWVKGETSGNGQKLLQISTDCDSDALKFIVEQENVGFCHLETMSCFGEFKHGLVGLESLLKQRLQDAPKESYTRRLFNDPALLDAKIKEEAEELTEAKGKQEISWEAADLFYFALAKLVTNNVSLKDVENNLNMKHLKITRRKGDAKPKFVAQAKAEEEAPTGPIHLHVVNASDKEGIKKALSRPIQKTSEIMHLVNPIIENVRDRGDSALLEYTEKFDGVKLSTPVLNAPFPEEYFEGLTEEMKDALDLSIENVRKFHAAQLPKETLEVETQPGVLCSRFPRPIEKVGLYIPGGTAILPSTALMLGVPAQVAQCKEIVFASPPRKSDGKVSPEVVYVAEKVGARMIVLAGGAQAVAAMAYGTETIPKVDKVLGPGNQFVTAAKMYVQNDTQALCSIDMPAGPSEVLVIADEDADADFVASDLLSQAEHGIDSQVILVGIKLSEKKIQEIQDAVHDQAMQLPRVDIVRKCIAHSTIILCDGYEEALEMSNKYAPEHLILQIANANDYVKLVDNAGSVFVGAYTPESCGDYSSGTNHTLPTYGYARQYSGANTATFQKFITAQNITPEGLENIGRAVMCVAKKEGLDGHRNAVKIRMSKLGLIPKDFQ.

The interval 1-229 (MVLPILPLID…FIVEQENVGF (229 aa)) is phosphoribosyl-AMP cyclohydrolase. The interval 230-312 (CHLETMSCFG…FYFALAKLVT (83 aa)) is phosphoribosyl-ATP pyrophosphohydrolase. Residues 313-799 (NNVSLKDVEN…KLGLIPKDFQ (487 aa)) form a histidinol dehydrogenase region. Q618 and H621 together coordinate Zn(2+). Catalysis depends on residues E687 and H688. 2 residues coordinate Zn(2+): D721 and H780.

This sequence in the C-terminal section; belongs to the histidinol dehydrogenase family. Zn(2+) is required as a cofactor.

The enzyme catalyses 1-(5-phospho-beta-D-ribosyl)-5'-AMP + H2O = 1-(5-phospho-beta-D-ribosyl)-5-[(5-phospho-beta-D-ribosylamino)methylideneamino]imidazole-4-carboxamide. The catalysed reaction is 1-(5-phospho-beta-D-ribosyl)-ATP + H2O = 1-(5-phospho-beta-D-ribosyl)-5'-AMP + diphosphate + H(+). It carries out the reaction L-histidinol + 2 NAD(+) + H2O = L-histidine + 2 NADH + 3 H(+). It participates in amino-acid biosynthesis; L-histidine biosynthesis; L-histidine from 5-phospho-alpha-D-ribose 1-diphosphate: step 2/9. The protein operates within amino-acid biosynthesis; L-histidine biosynthesis; L-histidine from 5-phospho-alpha-D-ribose 1-diphosphate: step 3/9. It functions in the pathway amino-acid biosynthesis; L-histidine biosynthesis; L-histidine from 5-phospho-alpha-D-ribose 1-diphosphate: step 9/9. The polypeptide is Histidine biosynthesis trifunctional protein (HIS4) (Saccharomyces bayanus (Yeast)).